Reading from the N-terminus, the 409-residue chain is MDSNFIFGIIAFTALVLVLAVIILFAKSKLVDSGDITISINNDPEKGITLPAGGKLLGALASKGIFVSSACGGGGSCGQCKVQVKSGGGEILPTELSHISKKEAKEGWRLACQVNVKSSMDVELPEEIFGVKKWECTVISNDNKATFIKELKLQIPEGEEVPFRAGGYIQIEADPHTVNYKDFDIPKEYHEDWDKFNLWRYVSKVDEHIIRAYSMASYPEEKGIIMLNVRIATPPPRNPDVPPGQMSSYIWSLKPGDKVTISGPFGEFFAKETDNEMVFIGGGAGMAPMRSHIFDQLKRLKSKRKMSFWYGARSKREIFYQEDFDQLAAENDNFVWHVALSDALPEDNWTGYTGFIHNVLYENYLKNHEAPEDCEYYMCGPPVMNAAVIGMLKSLGVEDENILLDDFGG.

A helical transmembrane segment spans residues 5–25 (FIFGIIAFTALVLVLAVIILF). Positions 34–128 (GDITISINND…SMDVELPEEI (95 aa)) constitute a 2Fe-2S ferredoxin-type domain. The [2Fe-2S] cluster site is built by cysteine 71, cysteine 77, cysteine 80, and cysteine 112. Residues 131–271 (VKKWECTVIS…SGPFGEFFAK (141 aa)) enclose the FAD-binding FR-type domain.

The protein belongs to the NqrF family. Composed of six subunits; NqrA, NqrB, NqrC, NqrD, NqrE and NqrF. [2Fe-2S] cluster is required as a cofactor. It depends on FAD as a cofactor.

It is found in the cell inner membrane. It catalyses the reaction a ubiquinone + n Na(+)(in) + NADH + H(+) = a ubiquinol + n Na(+)(out) + NAD(+). In terms of biological role, NQR complex catalyzes the reduction of ubiquinone-1 to ubiquinol by two successive reactions, coupled with the transport of Na(+) ions from the cytoplasm to the periplasm. The first step is catalyzed by NqrF, which accepts electrons from NADH and reduces ubiquinone-1 to ubisemiquinone by a one-electron transfer pathway. The chain is Na(+)-translocating NADH-quinone reductase subunit F from Actinobacillus pleuropneumoniae serotype 5b (strain L20).